We begin with the raw amino-acid sequence, 229 residues long: Uracil-DNA glycosylase (229 aa).

Catalysis depends on Asp64, which acts as the Proton acceptor.

Belongs to the uracil-DNA glycosylase (UDG) superfamily. UNG family.

It is found in the cytoplasm. It catalyses the reaction Hydrolyzes single-stranded DNA or mismatched double-stranded DNA and polynucleotides, releasing free uracil.. Excises uracil residues from the DNA which can arise as a result of misincorporation of dUMP residues by DNA polymerase or due to deamination of cytosine. In Salmonella agona (strain SL483), this protein is Uracil-DNA glycosylase.